The following is a 477-amino-acid chain: Probable cytosolic Fe-S cluster assembly factor GL21135 (477 aa).

The [4Fe-4S] cluster site is built by Cys23, Cys69, Cys72, Cys75, Cys188, Cys244, Cys396, and Cys400.

Belongs to the NARF family.

Functionally, component of the cytosolic iron-sulfur (Fe/S) protein assembly machinery. Required for maturation of extramitochondrial Fe/S proteins. The chain is Probable cytosolic Fe-S cluster assembly factor GL21135 from Drosophila persimilis (Fruit fly).